Here is a 433-residue protein sequence, read N- to C-terminus: 26S proteasome regulatory subunit 7 (433 aa).

Residues 1–22 (MPDYLGADQRKTKEDEKDDKPI) form a disordered region. Basic and acidic residues predominate over residues 8-22 (DQRKTKEDEKDDKPI). Lysine 116 carries the post-translational modification N6-acetyllysine. 216–223 (GPPGTGKT) serves as a coordination point for ATP. Lysine 422 is subject to N6-acetyllysine.

The protein belongs to the AAA ATPase family. Component of the 19S proteasome regulatory particle complex. The 26S proteasome consists of a 20S core particle (CP) and two 19S regulatory subunits (RP). The regulatory particle is made of a lid composed of 9 subunits, a base containing 6 ATPases including PSMC2 and few additional components. Interacts with NDC80/HEC; this interaction is detected only during M phase. Interacts and SQSTM1. Interacts with PAAF1. Directly interacts with TRIM5. Monoubiquitinated by RNF181. In terms of processing, phosphorylated. Dephosphorylated by UBLCP1 which impairs PSMC2 ATPase activity and disrupts 26S proteasome assembly.

It is found in the cytoplasm. It localises to the nucleus. Functionally, component of the 26S proteasome, a multiprotein complex involved in the ATP-dependent degradation of ubiquitinated proteins. This complex plays a key role in the maintenance of protein homeostasis by removing misfolded or damaged proteins, which could impair cellular functions, and by removing proteins whose functions are no longer required. Therefore, the proteasome participates in numerous cellular processes, including cell cycle progression, apoptosis, or DNA damage repair. PSMC2 belongs to the heterohexameric ring of AAA (ATPases associated with diverse cellular activities) proteins that unfolds ubiquitinated target proteins that are concurrently translocated into a proteolytic chamber and degraded into peptides. The sequence is that of 26S proteasome regulatory subunit 7 (PSMC2) from Bos taurus (Bovine).